The following is a 91-amino-acid chain: ATP-dependent Clp protease adapter protein ClpS (91 aa).

Belongs to the ClpS family. Binds to the N-terminal domain of the chaperone ClpA.

Involved in the modulation of the specificity of the ClpAP-mediated ATP-dependent protein degradation. The sequence is that of ATP-dependent Clp protease adapter protein ClpS from Helicobacter pylori (strain ATCC 700392 / 26695) (Campylobacter pylori).